The following is a 139-amino-acid chain: MANFKVVVSDPKEGRAYQIDVKDAEANALIGKSIGDVVDGAVFGLSGYKVKITGGCDGSGFVMKPDLLGPRRQRILMAVGVGYTPKHPGQRRRKMVRGKEVAPDIVQINAKVVEYGSKSIKALLGLEAPAEAPAEAPAE.

It belongs to the eukaryotic ribosomal protein eS6 family.

This is Small ribosomal subunit protein eS6 from Methanosarcina barkeri (strain Fusaro / DSM 804).